Consider the following 527-residue polypeptide: Zinc finger imprinted 2 (527 aa).

Residues 1–16 (MYQPEDDNNSDVTSDD) are compositionally biased toward acidic residues. The segment at 1 to 104 (MYQPEDDNNS…SRSQDAESYQ (104 aa)) is disordered. 3 stretches are compositionally biased toward basic and acidic residues: residues 17–26 (DMTRNRRESS), 35–56 (SGDR…DRWS), and 80–99 (FEMD…RSQD). Residues 176-246 (VTFEDVLVDF…ETDSRHTVIC (71 aa)) form the KRAB domain. The interval 247-322 (QGESHDDPLE…GICTSPQSAS (76 aa)) is disordered. Over residues 259–275 (QGNQEKLLTPITMNDPK) the composition is skewed to polar residues. The segment covering 297-307 (QSKDPLGKDPQ) has biased composition (basic and acidic residues). 5 C2H2-type zinc fingers span residues 328 to 350 (NRCE…ERIH), 356 to 378 (YECK…QKTH), 412 to 434 (FECF…LKAH), 466 to 488 (CQCC…YRTH), and 494 to 516 (YQCQ…YQLH).

The protein belongs to the krueppel C2H2-type zinc-finger protein family. In terms of tissue distribution, highest levels of expression in adult testis; modest levels in fetal kidney and brain.

It localises to the nucleus. Its function is as follows. May be involved in transcriptional regulation. The protein is Zinc finger imprinted 2 (ZIM2) of Homo sapiens (Human).